Reading from the N-terminus, the 131-residue chain is Small ribosomal subunit protein uS9 (131 aa).

It belongs to the universal ribosomal protein uS9 family.

This is Small ribosomal subunit protein uS9 from Haemophilus ducreyi (strain 35000HP / ATCC 700724).